Consider the following 680-residue polypeptide: DNA-directed RNA polymerase subunit beta' (680 aa).

Positions 69, 71, 87, and 90 each coordinate Zn(2+). 3 residues coordinate Mg(2+): D489, D491, and D493.

The protein belongs to the RNA polymerase beta' chain family. RpoC1 subfamily. In plastids the minimal PEP RNA polymerase catalytic core is composed of four subunits: alpha, beta, beta', and beta''. When a (nuclear-encoded) sigma factor is associated with the core the holoenzyme is formed, which can initiate transcription. Mg(2+) is required as a cofactor. The cofactor is Zn(2+).

It localises to the plastid. The protein localises to the chloroplast. The catalysed reaction is RNA(n) + a ribonucleoside 5'-triphosphate = RNA(n+1) + diphosphate. In terms of biological role, DNA-dependent RNA polymerase catalyzes the transcription of DNA into RNA using the four ribonucleoside triphosphates as substrates. In Lepidium virginicum (Virginia pepperweed), this protein is DNA-directed RNA polymerase subunit beta'.